The primary structure comprises 354 residues: MCQSPLHDFLHGLPKCEHHVHLEGCVTPELIFQLAEKNNIQLPNPATHPAYASVEALRARYAEFTSLNDFLDFYFHGMSVLHHQSDFEELAWAYFQKAHADGVHHAEVFFDPQVHQARGIDYETVVSGFTAGCKRAERELGLSTRLILCFVRHLPVDSATKLYELALASNHFESRVVHGLGWSSSEVGPPKDMFREIYASASGKGIRLTAHAGEEGDPTYISTALELGARRIDHGIRLVEDPELMERVAREGIMLTVCPLSNVRLRCVQSVEQVPIRKFLDAGVKFSINSDDPAYFGGYILDNYCAVQEAFQLSILEWRVIAENSVNESWIDEARKAELLKRIDDHVQKHTVVA.

Residues His19, His21, and His211 each contribute to the Zn(2+) site. The active-site Proton donor is Glu214. Asp291 lines the Zn(2+) pocket. Asp292 lines the substrate pocket.

The protein belongs to the metallo-dependent hydrolases superfamily. Adenosine and AMP deaminases family. Adenine deaminase type 2 subfamily. It depends on Zn(2+) as a cofactor.

The protein resides in the cytoplasm. Its subcellular location is the nucleus. The enzyme catalyses adenine + H2O + H(+) = hypoxanthine + NH4(+). Catalyzes the hydrolytic deamination of adenine to hypoxanthine. Plays an important role in the purine salvage pathway and in nitrogen catabolism. The sequence is that of Adenine deaminase (aah1) from Aspergillus fumigatus (strain ATCC MYA-4609 / CBS 101355 / FGSC A1100 / Af293) (Neosartorya fumigata).